The primary structure comprises 259 residues: Deoxyribose-phosphate aldolase (259 aa).

The active-site Proton donor/acceptor is Asp102. Catalysis depends on Lys167, which acts as the Schiff-base intermediate with acetaldehyde. The Proton donor/acceptor role is filled by Lys201.

The protein belongs to the DeoC/FbaB aldolase family. DeoC type 2 subfamily.

It localises to the cytoplasm. It catalyses the reaction 2-deoxy-D-ribose 5-phosphate = D-glyceraldehyde 3-phosphate + acetaldehyde. The protein operates within carbohydrate degradation; 2-deoxy-D-ribose 1-phosphate degradation; D-glyceraldehyde 3-phosphate and acetaldehyde from 2-deoxy-alpha-D-ribose 1-phosphate: step 2/2. In terms of biological role, catalyzes a reversible aldol reaction between acetaldehyde and D-glyceraldehyde 3-phosphate to generate 2-deoxy-D-ribose 5-phosphate. This chain is Deoxyribose-phosphate aldolase, found in Escherichia coli O45:K1 (strain S88 / ExPEC).